Consider the following 390-residue polypeptide: Endoglucanase gh5-1 (390 aa).

The signal sequence occupies residues 1 to 16 (MKATILASTFAAGALA). One can recognise a CBM1 domain in the interval 17–52 (QSGAWGQCGGNGWSGATSCISGYACNYVNDWYSQCQ). N-linked (GlcNAc...) asparagine glycosylation is found at N157 and N261.

Belongs to the glycosyl hydrolase 5 (cellulase A) family. In terms of processing, N-glycosylated.

The protein localises to the secreted. It carries out the reaction Endohydrolysis of (1-&gt;4)-beta-D-glucosidic linkages in cellulose, lichenin and cereal beta-D-glucans.. Endoglucanase that plays an important role in biomass degradation. Binds onto plant cell walls to participate in the hydrolysis of cellulose. The polypeptide is Endoglucanase gh5-1 (Neurospora crassa (strain ATCC 24698 / 74-OR23-1A / CBS 708.71 / DSM 1257 / FGSC 987)).